We begin with the raw amino-acid sequence, 86 residues long: RNA-binding protein Hfq (86 aa).

Residues 9 to 68 form the Sm domain; the sequence is DPYLNTLRKEKVPVSIYLVNGIKLQGSIESFDQFVVLLKNTVSQMVYKHAISTVVPARPV. A disordered region spans residues 66–86; the sequence is RPVRLPSPTDSEHGDSEPGNA. Residues 75-86 show a composition bias toward basic and acidic residues; that stretch reads DSEHGDSEPGNA.

The protein belongs to the Hfq family. As to quaternary structure, homohexamer.

Functionally, RNA chaperone that binds small regulatory RNA (sRNAs) and mRNAs to facilitate mRNA translational regulation in response to envelope stress, environmental stress and changes in metabolite concentrations. Also binds with high specificity to tRNAs. This Pseudomonas putida (strain ATCC 700007 / DSM 6899 / JCM 31910 / BCRC 17059 / LMG 24140 / F1) protein is RNA-binding protein Hfq.